Consider the following 239-residue polypeptide: Large ribosomal subunit protein uL2 (239 aa).

Disordered stretches follow at residues 1–20 and 202–239; these read MGHR…YRAP and FGGG…RRKR.

It belongs to the universal ribosomal protein uL2 family. In terms of assembly, part of the 50S ribosomal subunit. Forms a bridge to the 30S subunit in the 70S ribosome.

Its function is as follows. One of the primary rRNA binding proteins. Required for association of the 30S and 50S subunits to form the 70S ribosome, for tRNA binding and peptide bond formation. It has been suggested to have peptidyltransferase activity; this is somewhat controversial. Makes several contacts with the 16S rRNA in the 70S ribosome. This is Large ribosomal subunit protein uL2 from Methanosphaerula palustris (strain ATCC BAA-1556 / DSM 19958 / E1-9c).